The following is a 3008-amino-acid chain: Genome polyprotein (3008 aa).

S2 carries the N-acetylserine; by host modification. The segment at 2 to 23 (STNPKPQRKTKRNTNRRPMDVK) is interaction with STAT1. Positions 2–58 (STNPKPQRKTKRNTNRRPMDVKFPGGGQIVGGVYLLPRRGPRLGVRATRKTSERSQP) are interaction with EIF2AK2/PKR. The interval 2–59 (STNPKPQRKTKRNTNRRPMDVKFPGGGQIVGGVYLLPRRGPRLGVRATRKTSERSQPR) is interaction with DDX3X. Residues 2–75 (STNPKPQRKT…PKARRPEGRS (74 aa)) are disordered. At 2–168 (STNPKPQRKT…EDGINYATGN (167 aa)) the chain is on the cytoplasmic side. 2 consecutive short sequence motifs (nuclear localization signal) follow at residues 5-13 (PKPQRKTKR) and 38-43 (PRRGPR). The segment covering 7–16 (PQRKTKRNTN) has biased composition (basic residues). Residues 32 to 47 (GGVYLLPRRGPRLGVR) are compositionally biased toward low complexity. Position 53 is a phosphoserine; by host (S53). 2 consecutive short sequence motifs (nuclear localization signal) follow at residues 58-64 (PRGRRQP) and 66-71 (PKARRP). The segment covering 58-68 (PRGRRQPIPKA) has biased composition (basic residues). S99 and S116 each carry phosphoserine; by host. The segment at 112–152 (PRGRSRNLGKVIDTLTCGFADLMGYIPLVGAPVGSVARALA) is important for endoplasmic reticulum and mitochondrial localization. Positions 122-173 (VIDTLTCGFADLMGYIPLVGAPVGSVARALAHGVRALEDGINYATGNLPGCS) are interaction with APOA2. An important for lipid droplets localization region spans residues 164-167 (YATG). The chain crosses the membrane as a helical span at residues 169-189 (LPGCSFSIFLLALLSCLTVPA). Positions 178–191 (LLALLSCLTVPASA) are cleaved as a propeptide — ER anchor for the core protein, removed in mature form by host signal peptidase. Over 190–358 (SAVNYRNVSG…SGGHWGVLVG (169 aa)) the chain is Lumenal. N-linked (GlcNAc...) asparagine; by host glycosylation is found at N196, N209, and N234. Positions 265–296 (MVGAATVCSGLYIGDLCGGLFLVGQMFSFRPR) are important for fusion. An N-linked (GlcNAc...) asparagine; by host glycan is attached at N305. Residues 359–379 (VAYFSMQANWAKVILVLFLFA) form a helical membrane-spanning segment. The Lumenal portion of the chain corresponds to 380–725 (GVDAETHVSG…WEYVVLAFLL (346 aa)). The tract at residues 385 to 412 (THVSGAAVGRSTAGLANLFSSGSKQNLQ) is HVR1. Residues N417, N423, and N430 are each glycosylated (N-linked (GlcNAc...) (high mannose) asparagine; by host). Intrachain disulfides connect C429–C553, C452–C459, C487–C495, and C504–C509. N-linked (GlcNAc...) asparagine; by host glycosylation is present at N448. The segment at 475 to 479 (ANISG) is HVR2. N476 is a glycosylation site (N-linked (GlcNAc...) asparagine; by host). A CD81-binding 1 region spans residues 481–494 (SDDRPYCWHYAPRP). An N-linked (GlcNAc...) asparagine; by host glycan is attached at N533. The CD81-binding 2 stretch occupies residues 545–552 (PPHGAWFG). N-linked (GlcNAc...) asparagine; by host glycosylation is present at N557. 4 cysteine pairs are disulfide-bonded: C565/C570, C581/C585, C597/C620, and C607/C644. Residues N623 and N645 are each glycosylated (N-linked (GlcNAc...) (high mannose) asparagine; by host). A disulfide bond links C652 and C677. Positions 660 to 671 (VELSPLLLTTTA) are PKR/eIF2-alpha phosphorylation homology domain (PePHD). Residues 726–746 (LADARVSAYLWMMFMVSQVEA) traverse the membrane as a helical segment. Topologically, residues 747–757 (ALSNLININAA) are lumenal. Residues 758 to 778 (SAAGAQGFWYAILFICIVWHV) traverse the membrane as a helical segment. Residues 779-782 (KGRF) lie on the Cytoplasmic side of the membrane. The helical transmembrane segment at 783-803 (PAAAAYAACGLWPCFLLLLML) threads the bilayer. Over 804–813 (PERAYAYDQE) the chain is Lumenal. The chain crosses the membrane as a helical span at residues 814-834 (VAGSLGGAIVVMLTILTLSPH). Over 835 to 881 (YKLWLARGLWWIQYFIARTEAVLHVYIPSFNVRGPRDSVIVLAVLVC) the chain is Cytoplasmic. A helical transmembrane segment spans residues 882–902 (PDLVFDITKYLLAILGPLHIL). The Lumenal portion of the chain corresponds to 903 to 928 (QASLLRIPYFVRAQALVKICSLLRGV). In terms of domain architecture, Peptidase C18 spans 903 to 1026 (QASLLRIPYF…TETSKGWRLL (124 aa)). The protease NS2-3 stretch occupies residues 904–1206 (ASLLRIPYFV…PVESLETTMR (303 aa)). C922 carries S-palmitoyl cysteine; by host lipidation. The helical transmembrane segment at 929 to 949 (VYGKYFQMVVLKSRGLTGTYI) threads the bilayer. The segment at 929–949 (VYGKYFQMVVLKSRGLTGTYI) is interaction with host SCPS1. Topologically, residues 950–1657 (YDHLTPMSDW…CMSADLEVVT (708 aa)) are cytoplasmic. Residues H952, E972, and C993 each act as for protease NS2 activity; shared with dimeric partner in the active site. Residues 1027-1208 (APITAYAQQT…ESLETTMRSP (182 aa)) form the Peptidase S29 domain. Catalysis depends on charge relay system; for serine protease NS3 activity residues H1083 and D1107. Positions 1123 and 1125 each coordinate Zn(2+). The Charge relay system; for serine protease NS3 activity role is filled by S1165. Positions 1171 and 1175 each coordinate Zn(2+). The Helicase ATP-binding domain occupies 1217 to 1369 (PAVPQTYQVA…SNIEEVALPT (153 aa)). 1230-1237 (APTGSGKS) is a binding site for ATP. The Mg(2+) site is built by S1237 and E1317. The short motif at 1316–1319 (DECY) is the DECH box element. The segment at 1486–1498 (QRRGRTGRGRLGT) is RNA-binding. A helical membrane pass occupies residues 1658 to 1678 (STWVLVGGVLAALAAYCLSVG). Residues 1679–1690 (SVVIVGRVVLSG) form an NS3-binding region. Residues 1679–1805 (SVVIVGRVVL…AVTSPLTTQQ (127 aa)) are Cytoplasmic-facing. Residues 1806-1826 (TLLFNILGGWVASQIRDSDAS) form a helical membrane-spanning segment. Residues 1827–1828 (TA) are Lumenal-facing. A helical transmembrane segment spans residues 1829–1849 (FVVSGLAGAAVGSVGLGKILV). A topological domain (cytoplasmic) is located at residue D1850. A helical membrane pass occupies residues 1851–1871 (ILPGYGAGVRGAVVTFKIMSG). The Lumenal segment spans residues 1872–1881 (EMPSTEDLVN). Residues 1882–1902 (LLPAILSPGALVVEVVCPAIL) form a helical membrane-spanning segment. Over 1903–1972 (RRHVGPGEGA…WINEDCSTPC (70 aa)) the chain is Cytoplasmic. C1972 carries S-palmitoyl cysteine; by host lipidation. The stretch at 1973 to 2002 (AESWLWEVWDWVLHVLSDFKTCLKAKFVPL) is an intramembrane region. Residues 2003 to 2987 (MPGIPLLSWP…YHSMSHARPR (985 aa)) are Cytoplasmic-facing. Zn(2+)-binding residues include C2029, C2031, and C2052. An FKBP8-binding region spans residues 2120–2208 (ELFTEVDGIR…ASSSASQLSP (89 aa)). Residues 2120–2329 (ELFTEVDGIR…PVPSPRRKRT (210 aa)) are transcriptional activation. The interaction with non-structural protein 4A stretch occupies residues 2135-2139 (PKCKP). Positions 2189–2435 (RLARGSRPSL…ALVTPCAAEE (247 aa)) are interaction with host SKP2. A phosphoserine; by host mark is found at S2194, S2197, S2201, S2204, and S2207. Residues 2210 to 2245 (LLQATCTAPHDSPGTDLLEANLLWGSTATRVETDEK) are ISDR. The interval 2210 to 2272 (LLQATCTAPH…REVSVAAEIL (63 aa)) is interaction with EIF2AK2/PKR. Positions 2245-2303 (KVIILDSFESCVAEQNDDREVSVAAEILRPTKKFPPALPIWARPDYNPPLTETWKQQDY) are NS4B-binding. The segment at 2296-2373 (ETWKQQDYQA…TPTETTDSGP (78 aa)) is V3. Residues 2319–2322 (PPVP) carry the SH3-binding motif. The short motif at 2324 to 2332 (PRRKRTVQL) is the Nuclear localization signal element. A disordered region spans residues 2346 to 2406 (AKTFGQSEPS…DPDLTSDSWS (61 aa)). A Glycyl lysine isopeptide (Lys-Gly) (interchain with G-Cter in ubiquitin) cross-link involves residue K2347. S2446 bears the Phosphoserine; by host mark. The RdRp catalytic domain occupies 2631–2749 (PMGFSYDTRC…IAESDGVEED (119 aa)). 3 residues coordinate Mg(2+): D2637, D2735, and D2736. Residues 2988–3008 (YLLLCLLILTVGVGIFLLPAR) form a helical membrane-spanning segment.

The protein belongs to the hepacivirus polyprotein family. In terms of assembly, homooligomer. Interacts with E1 (via C-terminus). Interacts with the non-structural protein 5A. Interacts (via N-terminus) with host STAT1 (via SH2 domain); this interaction results in decreased STAT1 phosphorylation and ubiquitin-mediated proteasome-dependent STAT1 degradation, leading to decreased IFN-stimulated gene transcription. Interacts with host STAT3; this interaction constitutively activates STAT3. Interacts with host LTBR receptor. Interacts with host TNFRSF1A receptor and possibly induces apoptosis. Interacts with host HNRPK. Interacts with host YWHAE. Interacts with host UBE3A/E6AP. Interacts with host DDX3X. Interacts with host APOA2. Interacts with host RXRA protein. Interacts with host SP110 isoform 3/Sp110b; this interaction sequesters the transcriptional corepressor SP110 away from the nucleus. Interacts with host CREB3 nuclear transcription protein; this interaction triggers cell transformation. Interacts with host ACY3. Interacts with host C1QR1. Interacts with host RBM24; this interaction, which enhances the interaction of the mature core protein with 5'-UTR, may inhibit viral translation and favor replication. Interacts with host EIF2AK2/PKR; this interaction induces the autophosphorylation of EIF2AK2. Part of the viral assembly initiation complex composed of NS2, E1, E2, NS3, NS4A, NS5A and the mature core protein. As to quaternary structure, forms a heterodimer with envelope glycoprotein E2. Interacts with mature core protein. Interacts with protease NS2. The heterodimer E1/E2 interacts with host CLDN1; this interaction plays a role in viral entry into host cell. Interacts with host SPSB2 (via C-terminus). Part of the viral assembly initiation complex composed of NS2, E1, E2, NS3, NS4A, NS5A and the mature core protein. Interacts with host NEURL3; this interaction prevents E1 binding to glycoprotein E2. Forms a heterodimer with envelope glycoprotein E1. Interacts with host CD81 and SCARB1 receptors; these interactions play a role in viral entry into host cell. Interacts with host EIF2AK2/PKR; this interaction inhibits EIF2AK2 and probably allows the virus to evade the innate immune response. Interacts with host CD209/DC-SIGN and CLEC4M/DC-SIGNR. Interact with host SPCS1; this interaction is essential for viral particle assembly. Interacts with protease NS2. The heterodimer E1/E2 interacts with host CLDN1; this interaction plays a role in viral entry into host cell. Part of the viral assembly initiation complex composed of NS2, E1, E2, NS3, NS4A, NS5A and the mature core protein. Interacts with host SLC3A2/4F2hc; the interaction may facilitate viral entry into host cell. Interacts with human PLSCR1. In terms of assembly, homohexamer. Homoheptamer. Interacts with protease NS2. As to quaternary structure, homodimer. Interacts with host SPCS1; this interaction is essential for viral particle assembly. Interacts with envelope glycoprotein E1. Interacts with envelope glycoprotein E2. Interacts with viroporin p7. Interacts with serine protease/helicase NS3. Part of the replication complex composed of NS2, NS3, NS4A, NS4B, NS5A and the RNA-directed RNA polymerase embedded in an ER-derived membranous web. Part of the viral assembly initiation complex composed of NS2, E1, E2, NS3, NS4A, NS5A and the mature core protein. Interacts with protease NS2. Interacts with non-structural protein 4A; this interaction stabilizes the folding of NS3 serine protease. NS3-NS4A interaction is essential for NS3 activation and allows membrane anchorage of the latter. NS3/NS4A complex also prevents phosphorylation of host IRF3, thus preventing the establishment of dsRNA induced antiviral state. Interacts with host MAVS; this interaction leads to the cleavage and inhibition of host MAVS. Interacts with host TICAM1; this interaction leads to the cleavage and inhibition of host TICAM1. Interacts with host TANK-binding kinase/TBK1; this interaction results in the inhibition of the association between TBK1 and IRF3, which leads to the inhibition of IRF3 activation. Interacts with host RBM24. Part of the replication complex composed of NS2, NS3, NS4A, NS4B, NS5A and the RNA-directed RNA polymerase embedded in an ER-derived membranous web. Part of the viral assembly initiation complex composed of NS2, E1, E2, NS3, NS4A, NS5A and the mature core protein. In terms of assembly, interacts with NS3 serine protease; this interaction stabilizes the folding of NS3 serine protease. NS3-NS4A interaction is essential for NS3 activation and allows membrane anchorage of the latter. Interacts with non-structural protein 5A (via N-terminus). Part of the replication complex composed of NS2, NS3, NS4A, NS4B, NS5A and the RNA-directed RNA polymerase embedded in an ER-derived membranous web. Part of the viral assembly initiation complex composed of NS2, E1, E2, NS3, NS4A, NS5A and the mature core protein. As to quaternary structure, homomultimer. Interacts with non-structural protein NS5A. Interacts with host PLA2G4C; this interaction likely initiates the recruitment of replication complexes to lipid droplets. Interacts with host STING; this interaction disrupts the interaction between STING and TBK1 thereby suppressing the interferon signaling. Part of the replication complex composed of NS2, NS3, NS4A, NS4B, NS5A and the RNA-directed RNA polymerase embedded in an ER-derived membranous web. Monomer. Homodimer; dimerization is required for RNA-binding. Interacts with the mature core protein. Interacts (via N-terminus) with non-structural protein 4A. Interacts with non-structural protein 4B. Interacts (via region D2) with RNA-directed RNA polymerase. Part of the viral assembly initiation complex composed of NS2, E1, E2, NS3, NS4A, NS5A and the mature core protein. Part of the replication complex composed of NS2, NS3, NS4A, NS4B, NS5A and the RNA-directed RNA polymerase embedded in an ER-derived membranous web. Interacts with host GRB2. Interacts with host BIN1. Interacts with host PIK3R1. Interacts with host SRCAP. Interacts with host FKBP8. Interacts (via C-terminus) with host VAPB (via MSP domain). Interacts with host EIF2AK2/PKR; this interaction leads to disruption of EIF2AK2 dimerization by NS5A and probably allows the virus to evade the innate immune response. Interacts (via N-terminus) with host PACSIN2 (via N-terminus); this interaction attenuates protein kinase C alpha-mediated phosphorylation of PACSIN2 by disrupting the interaction between PACSIN2 and PRKCA. Interacts (via N-terminus) with host SRC kinase (via SH2 domain). Interacts with most Src-family kinases. Interacts with host IFI27 and SKP2; promotes the ubiquitin-mediated proteasomal degradation of NS5A. Interacts with host GPS2. Interacts with host TNFRSF21; this interaction allows the modulation by the virus of JNK, p38 MAPK, STAT3, and Akt signaling pathways in a DR6-dependent manner. Interacts (via N-terminus) with host CIDEB (via N-terminus); this interaction seems to regulate the association of HCV particles with APOE. Interacts with host CHKA/Choline Kinase-alpha; CHKA bridges host PI4KA and NS5A and potentiates NS5A-stimulated PI4KA activity, which then facilitates the targeting of the ternary complex to the ER for viral replication. Interacts with host SPSB2 (via C-terminus); this interaction targets NS5A for ubiquitination and degradation. Interacts with host RAB18; this interaction may promote the association of NS5A and other replicase components with lipid droplets. Interacts (via region D2) with host PPIA/CYPA; the interaction stimulates RNA-binding ability of NS5A and is dependent on the peptidyl-prolyl cis-trans isomerase activity of PPIA/CYPA. Interacts with host TRIM14; this interaction induces the degradation of NS5A. In terms of assembly, homooligomer. Interacts with non-structural protein 5A. Interacts with host VAPB. Interacts with host PRK2/PKN2. Interacts with host HNRNPA1 and SEPT6; these interactions facilitate viral replication. Part of the replication complex composed of NS2, NS3, NS4A, NS4B, NS5A and the RNA-directed RNA polymerase. Zn(2+) is required as a cofactor. Mg(2+) serves as cofactor. Post-translationally, specific enzymatic cleavages in vivo yield mature proteins. The structural proteins, core, E1, E2 and p7 are produced by proteolytic processing by host signal peptidases. The core protein precursor is synthesized as a 23 kDa, which is retained in the ER membrane through the hydrophobic signal peptide. Cleavage by the signal peptidase releases the 21 kDa mature core protein. The cleavage of the core protein precursor occurs between aminoacids 176 and 188 but the exact cleavage site is not known. Some degraded forms of the core protein appear as well during the course of infection. The other proteins (p7, NS2, NS3, NS4A, NS4B, NS5A and NS5B) are cleaved by the viral proteases. Autoprocessing between NS2 and NS3 is mediated by the NS2 cysteine protease catalytic domain and regulated by the NS3 N-terminal domain. Phosphorylated by host PKC and PKA. In terms of processing, ubiquitinated; mediated by UBE3A and leading to core protein subsequent proteasomal degradation. Post-translationally, highly N-glycosylated. Palmitoylation is required for NS2/3 autoprocessing and E2 recruitment to membranes. In terms of processing, palmitoylated. This modification may play a role in its polymerization or in protein-protein interactions. Post-translationally, phosphorylated on serines in a basal form termed p56. p58 is a hyperphosphorylated form of p56. p56 and p58 coexist in the cell in roughly equivalent amounts. Hyperphosphorylation is dependent on the presence of NS4A. Host CSNK1A1/CKI-alpha or RPS6KB1 kinases may be responsible for NS5A phosphorylation. Tyrosine phosphorylation is essential for the interaction with host SRC. In terms of processing, the N-terminus is phosphorylated by host PRK2/PKN2.

It localises to the host endoplasmic reticulum membrane. Its subcellular location is the host mitochondrion membrane. The protein localises to the virion. It is found in the host cytoplasm. The protein resides in the host nucleus. It localises to the host lipid droplet. Its subcellular location is the virion membrane. The protein localises to the host mitochondrion. It is found in the host cell membrane. The protein resides in the host perinuclear region. It catalyses the reaction Hydrolysis of four peptide bonds in the viral precursor polyprotein, commonly with Asp or Glu in the P6 position, Cys or Thr in P1 and Ser or Ala in P1'.. The catalysed reaction is a ribonucleoside 5'-triphosphate + H2O = a ribonucleoside 5'-diphosphate + phosphate + H(+). It carries out the reaction ATP + H2O = ADP + phosphate + H(+). The enzyme catalyses RNA(n) + a ribonucleoside 5'-triphosphate = RNA(n+1) + diphosphate. Inhibited by the antiviral drug hexamethylene amiloride. Inhibition by amantadine appears to be genotype-dependent. Also inhibited by long-alkyl-chain iminosugar derivatives. Its activity is regulated as follows. Activity is up-regulated by PRK2/PKN2-mediated phosphorylation. Packages viral RNA to form a viral nucleocapsid, and promotes virion budding. Participates in the viral particle production as a result of its interaction with the non-structural protein 5A. Binds RNA and may function as a RNA chaperone to induce the RNA structural rearrangements taking place during virus replication. Modulates viral translation initiation by interacting with viral IRES and 40S ribosomal subunit. Affects various cell signaling pathways, host immunity and lipid metabolism. Prevents the establishment of cellular antiviral state by blocking the interferon-alpha/beta (IFN-alpha/beta) and IFN-gamma signaling pathways and by blocking the formation of phosphorylated STAT1 and promoting ubiquitin-mediated proteasome-dependent degradation of STAT1. Activates STAT3 leading to cellular transformation. Regulates the activity of cellular genes, including c-myc and c-fos. May repress the promoter of p53, and sequester CREB3 and SP110 isoform 3/Sp110b in the cytoplasm. Represses cell cycle negative regulating factor CDKN1A, thereby interrupting an important check point of normal cell cycle regulation. Targets transcription factors involved in the regulation of inflammatory responses and in the immune response: suppresses TNF-induced NF-kappa-B activation, and activates AP-1. Binds to dendritic cells (DCs) via C1QR1, resulting in down-regulation of T-lymphocytes proliferation. Alters lipid metabolism by interacting with hepatocellular proteins involved in lipid accumulation and storage. Induces up-regulation of FAS promoter activity, and thereby contributes to the increased triglyceride accumulation in hepatocytes (steatosis). Functionally, forms a heterodimer with envelope glycoprotein E2, which mediates virus attachment to the host cell, virion internalization through clathrin-dependent endocytosis and fusion with host membrane. Fusion with the host cell is most likely mediated by both E1 and E2, through conformational rearrangements of the heterodimer required for fusion rather than a classical class II fusion mechanism. E1/E2 heterodimer binds host apolipoproteins such as APOB and ApoE thereby forming a lipo-viro-particle (LVP). APOE associated to the LVP allows the initial virus attachment to cell surface receptors such as the heparan sulfate proteoglycans (HSPGs), syndecan-1 (SDC1), syndecan-1 (SDC2), the low-density lipoprotein receptor (LDLR) and scavenger receptor class B type I (SCARB1). The cholesterol transfer activity of SCARB1 allows E2 exposure and binding of E2 to SCARB1 and the tetraspanin CD81. E1/E2 heterodimer binding on CD81 activates the epithelial growth factor receptor (EGFR) signaling pathway. Diffusion of the complex E1-E2-EGFR-SCARB1-CD81 to the cell lateral membrane allows further interaction with Claudin 1 (CLDN1) and occludin (OCLN) to finally trigger HCV entry. In terms of biological role, forms a heterodimer with envelope glycoprotein E1, which mediates virus attachment to the host cell, virion internalization through clathrin-dependent endocytosis and fusion with host membrane. Fusion with the host cell is most likely mediated by both E1 and E2, through conformational rearrangements of the heterodimer required for fusion rather than a classical class II fusion mechanism. The interaction between envelope glycoprotein E2 and host apolipoprotein E/APOE allows the proper assembly, maturation and infectivity of the viral particles. This interaction is probably promoted via the up-regulation of cellular autophagy by the virus. E1/E2 heterodimer binds host apolipoproteins such as APOB and APOE thereby forming a lipo-viro-particle (LVP). APOE associated to the LVP allows the initial virus attachment to cell surface receptors such as the heparan sulfate proteoglycans (HSPGs), syndecan-1 (SDC1), syndecan-1 (SDC2), the low-density lipoprotein receptor (LDLR) and scavenger receptor class B type I (SCARB1). The cholesterol transfer activity of SCARB1 allows E2 exposure and binding of E2 to SCARB1 and the tetraspanin CD81. E1/E2 heterodimer binding on CD81 activates the epithelial growth factor receptor (EGFR) signaling pathway. Diffusion of the complex E1-E2-EGFR-SCARB1-CD81 to the cell lateral membrane allows further interaction with Claudin 1 (CLDN1) and occludin (OCLN) to finally trigger HCV entry. Inhibits host EIF2AK2/PKR activation, preventing the establishment of an antiviral state. Viral ligand for CD209/DC-SIGN and CLEC4M/DC-SIGNR, which are respectively found on dendritic cells (DCs), and on liver sinusoidal endothelial cells and macrophage-like cells of lymph node sinuses. These interactions allow the capture of circulating HCV particles by these cells and subsequent facilitated transmission to permissive cells such as hepatocytes and lymphocyte subpopulations. The interaction between E2 and host amino acid transporter complex formed by SLC3A2 and SLC7A5/LAT1 may facilitate viral entry into host cell. Its function is as follows. Ion channel protein that acts as a viroporin and plays an essential role in the assembly, envelopment and secretion of viral particles. Regulates the host cell secretory pathway, which induces the intracellular retention of viral glycoproteins and favors assembly of viral particles. Creates a pore in acidic organelles and releases Ca(2+) and H(+) in the cytoplasm of infected cells, leading to a productive viral infection. High levels of cytoplasmic Ca(2+) may trigger membrane trafficking and transport of viral ER-associated proteins to viroplasms, sites of viral genome replication. This ionic imbalance induces the assembly of the inflammasome complex, which triggers the maturation of pro-IL-1beta into IL-1beta through the action of caspase-1. Targets also host mitochondria and induces mitochondrial depolarization. In addition of its role as a viroporin, acts as a lipid raft adhesion factor. Cysteine protease required for the proteolytic auto-cleavage between the non-structural proteins NS2 and NS3. The N-terminus of NS3 is required for the function of NS2 protease (active region NS2-3). Promotes the initiation of viral particle assembly by mediating the interaction between structural and non-structural proteins. Functionally, displays three enzymatic activities: serine protease with a chymotrypsin-like fold, NTPase and RNA helicase. NS3 serine protease, in association with NS4A, is responsible for the cleavages of NS3-NS4A, NS4A-NS4B, NS4B-NS5A and NS5A-NS5B. The NS3/NS4A complex prevents phosphorylation of host IRF3, thus preventing the establishment of dsRNA induced antiviral state. The NS3/NS4A complex induces host amino acid transporter component SLC3A2, thus contributing to HCV propagation. NS3 RNA helicase binds to RNA and unwinds both dsDNA and dsRNA in the 3' to 5' direction, and likely resolves RNA complicated stable secondary structures in the template strand. Binds a single ATP and catalyzes the unzipping of a single base pair of dsRNA. Inhibits host antiviral proteins TBK1 and IRF3 thereby preventing the establishment of an antiviral state. Cleaves host MAVS/CARDIF thereby preventing the establishment of an antiviral state. Cleaves host TICAM1/TRIF, thereby disrupting TLR3 signaling and preventing the establishment of an antiviral state. In terms of biological role, induces a specific membrane alteration that serves as a scaffold for the virus replication complex. This membrane alteration gives rise to the so-called ER-derived membranous web that contains the replication complex. NS4B self-interaction contributes to its function in membranous web formation. Promotes host TRIF protein degradation in a CASP8-dependent manner thereby inhibiting host TLR3-mediated interferon signaling. Disrupts the interaction between STING and TBK1 contributing to the inhibition of interferon signaling. Its function is as follows. Phosphorylated protein that is indispensable for viral replication and assembly. Both hypo- and hyperphosphorylated states are required for the viral life cycle. The hyperphosphorylated form of NS5A is an inhibitor of viral replication. Involved in RNA-binding and especially in binding to the viral genome. Zinc is essential for RNA-binding. Participates in the viral particle production as a result of its interaction with the mature viral core protein. Its interaction with host VAPB may target the viral replication complex to vesicles. Down-regulates viral IRES translation initiation. Mediates interferon resistance, presumably by interacting with and inhibiting host EIF2AK2/PKR. Prevents BIN1-induced apoptosis. Acts as a transcriptional activator of some host genes important for viral replication when localized in the nucleus. Via the interaction with host PACSIN2, modulates lipid droplet formation in order to promote virion assembly. Modulates TNFRSF21/DR6 signaling pathway for viral propagation. RNA-dependent RNA polymerase that performs primer-template recognition and RNA synthesis during viral replication. Initiates RNA transcription/replication at a flavin adenine dinucleotide (FAD), resulting in a 5'- FAD cap on viral RNAs. In this way, recognition of viral 5' RNA by host pattern recognition receptors can be bypassed, thereby evading activation of antiviral pathways. This chain is Genome polyprotein, found in Homo sapiens (Human).